Here is a 265-residue protein sequence, read N- to C-terminus: Mlc titration factor A (265 aa).

Zn(2+) contacts are provided by His111, His148, His152, and Glu211.

It belongs to the MtfA family. As to quaternary structure, interacts with Mlc. Zn(2+) serves as cofactor.

The protein resides in the cytoplasm. Its function is as follows. Involved in the modulation of the activity of the glucose-phosphotransferase system (glucose-PTS). Interacts with the transcriptional repressor Mlc, preventing its interaction with DNA and leading to the modulation of expression of genes regulated by Mlc, including ptsG, which encodes the PTS system glucose-specific EIICB component. In terms of biological role, shows zinc-dependent metallopeptidase activity. The sequence is that of Mlc titration factor A from Pectobacterium atrosepticum (strain SCRI 1043 / ATCC BAA-672) (Erwinia carotovora subsp. atroseptica).